The primary structure comprises 403 residues: Ribosomal RNA large subunit methyltransferase I (403 aa).

A PUA domain is found at Tyr-9 to Arg-88.

This sequence belongs to the methyltransferase superfamily. RlmI family.

It localises to the cytoplasm. The enzyme catalyses cytidine(1962) in 23S rRNA + S-adenosyl-L-methionine = 5-methylcytidine(1962) in 23S rRNA + S-adenosyl-L-homocysteine + H(+). Functionally, specifically methylates the cytosine at position 1962 (m5C1962) of 23S rRNA. This is Ribosomal RNA large subunit methyltransferase I from Salmonella typhi.